Here is a 91-residue protein sequence, read N- to C-terminus: Gas vesicle protein K (91 aa).

The protein belongs to the gas vesicle GvpK family.

The protein localises to the gas vesicle. Its function is as follows. Might be involved in nucleating gas vesicle formation. Gas vesicles are hollow, gas filled proteinaceous nanostructures found in some microorganisms. It is not clear what function gas vesicles perform in soil bacteria. This is Gas vesicle protein K from Streptomyces sp. (strain CB03234).